A 260-amino-acid polypeptide reads, in one-letter code: 3-methyl-2-oxobutanoate hydroxymethyltransferase (260 aa).

Mg(2+) is bound by residues Asp42 and Asp81. 3-methyl-2-oxobutanoate contacts are provided by residues 42–43 (DS), Asp81, and Lys109. Glu111 lines the Mg(2+) pocket. The Proton acceptor role is filled by Glu178.

This sequence belongs to the PanB family. In terms of assembly, homodecamer; pentamer of dimers. Requires Mg(2+) as cofactor.

The protein localises to the cytoplasm. The catalysed reaction is 3-methyl-2-oxobutanoate + (6R)-5,10-methylene-5,6,7,8-tetrahydrofolate + H2O = 2-dehydropantoate + (6S)-5,6,7,8-tetrahydrofolate. It functions in the pathway cofactor biosynthesis; (R)-pantothenate biosynthesis; (R)-pantoate from 3-methyl-2-oxobutanoate: step 1/2. In terms of biological role, catalyzes the reversible reaction in which hydroxymethyl group from 5,10-methylenetetrahydrofolate is transferred onto alpha-ketoisovalerate to form ketopantoate. This is 3-methyl-2-oxobutanoate hydroxymethyltransferase from Ruthia magnifica subsp. Calyptogena magnifica.